A 212-amino-acid chain; its full sequence is ATP-dependent Clp protease proteolytic subunit (212 aa).

Ser113 acts as the Nucleophile in catalysis. His138 is a catalytic residue.

It belongs to the peptidase S14 family. Fourteen ClpP subunits assemble into 2 heptameric rings which stack back to back to give a disk-like structure with a central cavity, resembling the structure of eukaryotic proteasomes.

The protein localises to the cytoplasm. The enzyme catalyses Hydrolysis of proteins to small peptides in the presence of ATP and magnesium. alpha-casein is the usual test substrate. In the absence of ATP, only oligopeptides shorter than five residues are hydrolyzed (such as succinyl-Leu-Tyr-|-NHMec, and Leu-Tyr-Leu-|-Tyr-Trp, in which cleavage of the -Tyr-|-Leu- and -Tyr-|-Trp bonds also occurs).. Cleaves peptides in various proteins in a process that requires ATP hydrolysis. Has a chymotrypsin-like activity. Plays a major role in the degradation of misfolded proteins. The protein is ATP-dependent Clp protease proteolytic subunit of Saccharophagus degradans (strain 2-40 / ATCC 43961 / DSM 17024).